A 362-amino-acid chain; its full sequence is Histidine biosynthesis bifunctional protein HisB (362 aa).

Residues 1-173 (MQPTLFIDRD…TVTNCGKRPP (173 aa)) form a histidinol-phosphatase region. Aspartate 8 (nucleophile) is an active-site residue. Aspartate 8 and aspartate 10 together coordinate Mg(2+). Aspartate 10 acts as the Proton donor in catalysis. Positions 91, 93, 99, and 101 each coordinate Zn(2+). Residue aspartate 128 participates in Mg(2+) binding. Positions 174 to 362 (RFAEVIRQTK…NEMPSSKGVL (189 aa)) are imidazoleglycerol-phosphate dehydratase.

It in the N-terminal section; belongs to the histidinol-phosphatase family. In the C-terminal section; belongs to the imidazoleglycerol-phosphate dehydratase family. Mg(2+) serves as cofactor. Zn(2+) is required as a cofactor.

Its subcellular location is the cytoplasm. The enzyme catalyses D-erythro-1-(imidazol-4-yl)glycerol 3-phosphate = 3-(imidazol-4-yl)-2-oxopropyl phosphate + H2O. The catalysed reaction is L-histidinol phosphate + H2O = L-histidinol + phosphate. Its pathway is amino-acid biosynthesis; L-histidine biosynthesis; L-histidine from 5-phospho-alpha-D-ribose 1-diphosphate: step 6/9. It participates in amino-acid biosynthesis; L-histidine biosynthesis; L-histidine from 5-phospho-alpha-D-ribose 1-diphosphate: step 8/9. In Haemophilus influenzae (strain 86-028NP), this protein is Histidine biosynthesis bifunctional protein HisB.